The primary structure comprises 352 residues: Protein RecA (352 aa).

Residue 66–73 (GPESSGKT) participates in ATP binding.

Belongs to the RecA family.

Its subcellular location is the cytoplasm. Its function is as follows. Can catalyze the hydrolysis of ATP in the presence of single-stranded DNA, the ATP-dependent uptake of single-stranded DNA by duplex DNA, and the ATP-dependent hybridization of homologous single-stranded DNAs. It interacts with LexA causing its activation and leading to its autocatalytic cleavage. This Psychrobacter arcticus (strain DSM 17307 / VKM B-2377 / 273-4) protein is Protein RecA.